Reading from the N-terminus, the 381-residue chain is Guanine nucleotide-binding protein G(olf) subunit alpha (381 aa).

The interval 1 to 25 is disordered; the sequence is MGCLGNSSKTAEDQGVDEKERREAN. Gly2 is lipidated: N-palmitoyl glycine. The S-palmitoyl cysteine moiety is linked to residue Cys3. Over residues 10-25 the composition is skewed to basic and acidic residues; that stretch reads TAEDQGVDEKERREAN. Residues 41–381 form the G-alpha domain; it reads ATHRLLLLGA…RMHLKQYELL (341 aa). Positions 44-57 are G1 motif; it reads RLLLLGAGESGKST. Glu52, Ser53, Gly54, Lys55, Ser56, and Thr57 together coordinate GTP. Ser56 provides a ligand contact to Mg(2+). Thr178 carries the post-translational modification Phosphothreonine. Residues 183 to 191 form a G2 motif region; the sequence is DLLRCRVLT. Residues Leu185, Arg186, and Thr191 each coordinate GTP. Residues Thr191 and Asp210 each contribute to the Mg(2+) site. The G3 motif stretch occupies residues 206–215; that stretch reads FHMFDVGGQR. Residues Gly213, Asn279, Lys280, Asp282, and Ala353 each coordinate GTP. A G4 motif region spans residues 275-282; sequence ILFLNKQD. Positions 351–356 are G5 motif; sequence TCAVDT.

It belongs to the G-alpha family. G(s) subfamily. G proteins are composed of 3 units; alpha, beta and gamma. The alpha chain contains the guanine nucleotide binding site. Interacts with GAS2L2. Interacts (GDP-bound form) with RIC8B (via C-terminus); promoting GNAL folding and association with the plasma membrane.

It localises to the cell membrane. The catalysed reaction is GTP + H2O = GDP + phosphate + H(+). In terms of biological role, guanine nucleotide-binding protein (G protein) involved as transducer in olfactory signal transduction controlled by G protein-coupled receptors (GPCRs). Contains the guanine nucleotide binding site and alternates between an active, GTP-bound state and an inactive, GDP-bound state. Signaling by an activated GPCR promotes GDP release and GTP binding. The alpha subunit has a low GTPase activity that converts bound GTP to GDP, thereby terminating the signal. Both GDP release and GTP hydrolysis are modulated by numerous regulatory proteins. GNAL/G(olf) alpha specifically mediates olfactory signal transduction within the olfactory neuroepithelium and the basal ganglia following GPCRs activation. Acts by promoting the specific activation of adenylyl cyclase ADCY3, resulting in increased levels of the signaling molecule cAMP. The protein is Guanine nucleotide-binding protein G(olf) subunit alpha of Rattus norvegicus (Rat).